We begin with the raw amino-acid sequence, 143 residues long: MFMGEYKHNMDSKGRIIIPAKFRSELGDKFVATRGLDHCLFVYPMHEWSKLEKKLTSLPITSKNARTFVRFFFSGATECEFDKQGRISIPSNLREYAELQKEVVIIGLANRIELWSSKRWGGYLDSAEESYEEIAAAMEDLGI.

2 consecutive SpoVT-AbrB domains span residues 5–47 (EYKH…PMHE) and 76–119 (ATEC…SSKR).

Belongs to the MraZ family. As to quaternary structure, forms oligomers.

Its subcellular location is the cytoplasm. The protein localises to the nucleoid. This chain is Transcriptional regulator MraZ, found in Halothermothrix orenii (strain H 168 / OCM 544 / DSM 9562).